A 918-amino-acid chain; its full sequence is GPI ethanolamine phosphate transferase 3 (918 aa).

Residues 16-36 (IGTWKYIQACIFFAIILISNF) form a helical membrane-spanning segment. N-linked (GlcNAc...) asparagine glycans are attached at residues N54, N71, N101, N197, and N399. Helical transmembrane passes span 429-449 (LFPMIIGFLLLIIGGFNLALL), 459-479 (MSANMAPSVMKCLPVCLILIL), 486-506 (SPFPAEFYVLLPSFYILLNSF), 523-543 (FSIFITFLHVCSFGSNSFTVW), 547-563 (LCHFLIITIGLVMFCKC), 567-587 (MSPLFACSTYSALAFILLQVI), 616-636 (TLIVLALMALSSIILPLILQL), 651-671 (LSILYFFELISSIFWIAHHVF), 687-707 (SLANTYVICILGVLIWQFFLL), 715-735 (INVIERSYFVFALLYSFLSFL), 738-758 (PLGHLSLFSCFLQILLLIQLK), 762-782 (PSVGHNFFSVTLGLLGLSHFF), 813-833 (IFMFLHTVGAPILTCISIPLF), 853-873 (FSFILYNLLISTSTVFFAGFF), and 887-907 (FMLSGILLVTHQLFVLIQCFG).

This sequence belongs to the PIGG/PIGN/PIGO family. PIGO subfamily. In terms of processing, glycosylated.

The protein resides in the endoplasmic reticulum membrane. It functions in the pathway glycolipid biosynthesis; glycosylphosphatidylinositol-anchor biosynthesis. Its function is as follows. Involved in glycosylphosphatidylinositol-anchor biosynthesis. Transfers ethanolamine phosphate to the GPI third mannose which links the GPI-anchor to the C-terminus of the proteins by an amide bond. Involved in cell wall biosynthesis. In Schizosaccharomyces pombe (strain 972 / ATCC 24843) (Fission yeast), this protein is GPI ethanolamine phosphate transferase 3 (gpi13).